The chain runs to 1006 residues: Cytosolic carboxypeptidase 3 (1006 aa).

In terms of domain architecture, Peptidase M14 spans 304–576 (YPYTYSNLQE…HFCDSLLDYC (273 aa)). Residues His-368, Glu-371, and His-464 each contribute to the Zn(2+) site. The Proton donor/acceptor role is filled by Glu-540. The interval 790–810 (ESHHQLKSKAKRCSSFQSKRT) is disordered.

Belongs to the peptidase M14 family. Requires Zn(2+) as cofactor. In terms of tissue distribution, widely expressed. Expressed abundantly in tissues with m otile cilia such as testis, lung and trachea. Abundantly expressed in pituitary and kidney, moderately expressed in brain, eye, fat, pancreas, stomach, and adrenal.

The protein localises to the cytoplasm. It localises to the cytosol. It catalyses the reaction (L-glutamyl)(n+1)-gamma-L-glutamyl-L-glutamyl-[protein] + H2O = (L-glutamyl)(n)-gamma-L-glutamyl-L-glutamyl-[protein] + L-glutamate. Its function is as follows. Metallocarboxypeptidase that mediates deglutamylation of tubulin and non-tubulin target proteins. Catalyzes the removal of polyglutamate side chains present on the gamma-carboxyl group of glutamate residues within the C-terminal tail of tubulin protein. Specifically cleaves tubulin long-side-chains, while it is not able to remove the branching point glutamate. Also catalyzes the removal of polyglutamate residues from the carboxy-terminus of non-tubulin proteins such as MYLK. May catalyze the hydrolysis of aspartate from the carboxy-terminus of target proteins. Does not show detyrosinase or deglycylase activities from the carboxy-terminus of target proteins. This Mus musculus (Mouse) protein is Cytosolic carboxypeptidase 3.